An 84-amino-acid chain; its full sequence is uncharacterized protein (84 aa).

This protein may be involved in virus assembly. This is an uncharacterized protein from Saccharolobus solfataricus (Sulfolobus solfataricus).